Reading from the N-terminus, the 86-residue chain is Small ribosomal subunit protein bS16 (86 aa).

The protein belongs to the bacterial ribosomal protein bS16 family.

This is Small ribosomal subunit protein bS16 from Borrelia garinii subsp. bavariensis (strain ATCC BAA-2496 / DSM 23469 / PBi) (Borreliella bavariensis).